Here is a 348-residue protein sequence, read N- to C-terminus: Heat-inducible transcription repressor HrcA (348 aa).

The protein belongs to the HrcA family.

Functionally, negative regulator of class I heat shock genes (grpE-dnaK-dnaJ and groELS operons). Prevents heat-shock induction of these operons. In Thermodesulfovibrio yellowstonii (strain ATCC 51303 / DSM 11347 / YP87), this protein is Heat-inducible transcription repressor HrcA.